The primary structure comprises 1272 residues: CST complex subunit CTC1 (1272 aa).

The protein belongs to the CTC1 family. Component of the CST complex, composed of CTC1, TEN1 and STN1. Interacts with POT1A.

The protein localises to the nucleus. Its subcellular location is the chromosome. It is found in the telomere. Its function is as follows. Component of the CST complex, a complex that binds to single-stranded DNA and is required to protect telomeres from DNA degradation. The CST complex binds single-stranded DNA with high affinity in a sequence-independent manner, while isolated subunits bind DNA with low affinity by themselves. Associates with enzymatically active telomerase. The polypeptide is CST complex subunit CTC1 (Arabidopsis thaliana (Mouse-ear cress)).